The primary structure comprises 60 residues: Mastoparan-V (60 aa).

An N-terminal signal peptide occupies residues 1–27 (MKNTILILFTAFIALLGFFGMSAEALA). AXPX repeat units follow at residues 27-30 (ADPV), 31-34 (ADPL), 35-38 (AGPN), and 41-44 (ADPE). The propeptide occupies 28–45 (DPVADPLAGPNAEADPEA). Leu59 carries the post-translational modification Leucine amide.

It belongs to the MCD family. Mastoparan subfamily. Expressed by the venom gland.

It is found in the secreted. It localises to the target cell membrane. In terms of biological role, antimicrobial and mast cell degranulating peptide. Has broad spectrum antibacterial activity against both Gram-positive and Gram-negative bacteria (S.aureus MIC=32-64 ug/ml, S.xylosus MIC=3 ug/ml, S.alactolyticus MIC=16 ug/ml, C.koseri MIC=4 ug/ml, E.coli MIC=8 ug/ml, K.pneumoniae MIC=64 ug/ml, P.aerugiosa MIC=256 ug/ml, S.choleraesuis MIC=32 ug/ml, S.typhimurium MIC=32 ug/ml, V.parahamelytics MIC=32 ug/ml). Affects membrane permeability of E.coli. Shows hemolytic activities on sheep, chicken and human erythrocytes. Its mast cell degranulation activity may be related to the activation of G-protein coupled receptors in mast cells as well as interaction with other proteins located in cell endosomal membranes in the mast cells. This is Mastoparan-V from Vespa velutina flavitarsus (Asian hornet).